A 78-amino-acid polypeptide reads, in one-letter code: UPF0335 protein A1E_00570 (78 aa).

The protein belongs to the UPF0335 family.

This Rickettsia canadensis (strain McKiel) protein is UPF0335 protein A1E_00570.